We begin with the raw amino-acid sequence, 412 residues long: MADNKRIVLAYSGGLDTSVAISYLKERTGKDVVAVSLDVGQGGESLETIKQRALACGAVESYVVDARDEFANEYCMKALKANAMYEGVYPLVSAISRPLISKHLVRAAHQFGADTISHGCTGKGNDQVRFEVSIASIDPTLKAISPIRDLSLTRDVEIAFAKEHKLPITQTEKSPYSIDQNVWGRAIETGFLEDPWNGPTKDCYSYTDDPAFPPVEDEVVIEFKEGVPVKIDGRDVTPLQAIEEMNRRAGAQGVGRIDLIEDRLVGIKSRELYEAPGAVALITAHQELENCCLEREQHRIKRDIDKRWGELVYDAQWFSPATQSLNAFIEDTQKYVSGEIRMVLHGGRAVVTGRRSDSSLYDYKLATYDSGDTFDQKSSNGFIDIYGLPSRVAAARDVKFGNGIEVPENTVE.

Residue 10–18 (AYSGGLDTS) participates in ATP binding. Tyr-89 serves as a coordination point for L-citrulline. Residue Gly-119 participates in ATP binding. L-aspartate contacts are provided by Thr-121, Asn-125, and Asp-126. An L-citrulline-binding site is contributed by Asn-125. L-citrulline is bound by residues Arg-129, Ser-177, Glu-261, and Tyr-273.

Belongs to the argininosuccinate synthase family. Type 1 subfamily. In terms of assembly, homotetramer.

The protein localises to the cytoplasm. It catalyses the reaction L-citrulline + L-aspartate + ATP = 2-(N(omega)-L-arginino)succinate + AMP + diphosphate + H(+). It participates in amino-acid biosynthesis; L-arginine biosynthesis; L-arginine from L-ornithine and carbamoyl phosphate: step 2/3. The chain is Argininosuccinate synthase from Bifidobacterium longum (strain DJO10A).